The primary structure comprises 269 residues: Formamidopyrimidine-DNA glycosylase (269 aa).

The active-site Schiff-base intermediate with DNA is the P2. The active-site Proton donor is the E3. The active-site Proton donor; for beta-elimination activity is K57. DNA contacts are provided by H90, R109, and K150. The FPG-type zinc finger occupies 235 to 269 (QVYGRKGEPCRVCGTPIVATKHAQRATFYCRHCQK). The active-site Proton donor; for delta-elimination activity is the R259.

The protein belongs to the FPG family. In terms of assembly, monomer. Zn(2+) serves as cofactor.

The enzyme catalyses Hydrolysis of DNA containing ring-opened 7-methylguanine residues, releasing 2,6-diamino-4-hydroxy-5-(N-methyl)formamidopyrimidine.. It carries out the reaction 2'-deoxyribonucleotide-(2'-deoxyribose 5'-phosphate)-2'-deoxyribonucleotide-DNA = a 3'-end 2'-deoxyribonucleotide-(2,3-dehydro-2,3-deoxyribose 5'-phosphate)-DNA + a 5'-end 5'-phospho-2'-deoxyribonucleoside-DNA + H(+). Functionally, involved in base excision repair of DNA damaged by oxidation or by mutagenic agents. Acts as a DNA glycosylase that recognizes and removes damaged bases. Has a preference for oxidized purines, such as 7,8-dihydro-8-oxoguanine (8-oxoG). Has AP (apurinic/apyrimidinic) lyase activity and introduces nicks in the DNA strand. Cleaves the DNA backbone by beta-delta elimination to generate a single-strand break at the site of the removed base with both 3'- and 5'-phosphates. The chain is Formamidopyrimidine-DNA glycosylase from Salmonella dublin (strain CT_02021853).